The following is a 270-amino-acid chain: MSAVEQPPVYKIALGIEYDGSKYYGWQRQNEVRSVQEKLEKALSQVANEPVNVFCAGRTDAGVHGTGQVVHFETTALRKDAAWTLGVNANLPGDIAVRWVKAVPEDFHARFSATARRYRYIIYNHRLRPAILGHGVTHFYEPLDAERMHRAAQCLIGENDFTSFRAVQCQSRTPWRNVMHINVTRHGAYVVVDIKANAFVHHMVRNIVGSLMEVGAHNQPESWIAELLAAKDRRLSAATAKAEGLYLVAVDYPERFDLPKTPLGPLFLAD.

Residue D60 is the Nucleophile of the active site. The RNA binding stretch occupies residues 107–111; that stretch reads FHARF. Y118 is a binding site for substrate. The tract at residues 168-172 is interaction with tRNA; the sequence is QCQSR.

It belongs to the tRNA pseudouridine synthase TruA family. Homodimer.

The catalysed reaction is uridine(38/39/40) in tRNA = pseudouridine(38/39/40) in tRNA. Its function is as follows. Formation of pseudouridine at positions 38, 39 and 40 in the anticodon stem and loop of transfer RNAs. The polypeptide is tRNA pseudouridine synthase A (Citrobacter koseri (strain ATCC BAA-895 / CDC 4225-83 / SGSC4696)).